The following is a 133-amino-acid chain: Protein Wnt-4 (133 aa).

Ser-1 is lipidated: O-palmitoleoyl serine; by PORCN. Cystine bridges form between Cys-69–Cys-114 and Cys-99–Cys-109. N-linked (GlcNAc...) asparagine glycosylation occurs at Asn-100.

This sequence belongs to the Wnt family. Palmitoleoylation is required for efficient binding to frizzled receptors. Depalmitoleoylation leads to Wnt signaling pathway inhibition.

It localises to the secreted. It is found in the extracellular space. Its subcellular location is the extracellular matrix. In terms of biological role, ligand for members of the frizzled family of seven transmembrane receptors. Plays an important role in embryonic development. This is Protein Wnt-4 (WNT-4) from Strongylocentrotus purpuratus (Purple sea urchin).